The chain runs to 108 residues: UPF0145 protein LCA_1282 (108 aa).

It belongs to the UPF0145 family.

The polypeptide is UPF0145 protein LCA_1282 (Latilactobacillus sakei subsp. sakei (strain 23K) (Lactobacillus sakei subsp. sakei)).